The sequence spans 865 residues: Envelope glycoprotein gp160 (865 aa).

The N-terminal stretch at 1 to 20 (MRYTIITLGIIVIGIGIVLS) is a signal peptide. The Extracellular segment spans residues 21–705 (KQWITVFYGI…SKWLNILKMG (685 aa)). An N-linked (GlcNAc...) asparagine; by host glycan is attached at N35. A disulfide bridge links C42 with C55. N68, N117, N150, N165, N195, N198, N210, N252, N255, N266, N276, N282, N294, N306, N316, N373, N414, N451, N488, and N491 each carry an N-linked (GlcNAc...) asparagine; by host glycan. Intrachain disulfides connect C101-C218, C108-C209, C113-C166, C231-C261, and C241-C253. The tract at residues 113 to 165 (CVELNSTRERATTPTTTPKSTGLPCVGPTSGENLQSCNASIIEREMEDEPASN) is V1. A V2 region spans residues 166-209 (CTFAMAGYVRDQKKNYYSVVWNDAEIYCKNKTNSTSKECYMIHC). Residues 311-343 (CRRPGNKTVLPVTIMAGLVFHSQKYNMKLRQAW) are V3. Cysteines 311 and 344 form a disulfide. An intrachain disulfide couples C396 to C471. The interval 403 to 444 (CKMDWFLNYLNNKTWDAYHNFCSSKKKGHAPGPCVQRTYVAY) is V4. A V5 region spans residues 487 to 494 (KNRTNVTL). The tract at residues 537 to 557 (VPFVLGFLGFLGAAGTAMGAA) is fusion peptide. The tract at residues 600 to 616 (LNARVTALEKYLEDQAR) is immunosuppression. N-linked (GlcNAc...) asparagine; by host glycans are attached at residues N645 and N661. Positions 650-675 (EWERQIADLESNITGQLVKAREQEEK) form a coiled coil. Residues 682-703 (KLTSWSDFWSWFDFSKWLNILK) form an MPER; binding to GalCer region. The helical transmembrane segment at 706 to 726 (FLVIVGIIGLRLLYTVYGCIV) threads the bilayer. Residues 727-865 (RVRQGYVPLS…VRQGLEEILN (139 aa)) lie on the Cytoplasmic side of the membrane. The YXXL motif; contains endocytosis signal signature appears at 732–735 (YVPL). Positions 744–763 (VGKGRPDNADEPGEGGDNSR) are disordered.

The mature envelope protein (Env) consists of a homotrimer of non-covalently associated gp120-gp41 heterodimers. The resulting complex protrudes from the virus surface as a spike. Interacts with host CD4 and CCR5. Gp120 also interacts with the C-type lectins CD209/DC-SIGN and CLEC4M/DC-SIGNR (collectively referred to as DC-SIGN(R)). In terms of assembly, the mature envelope protein (Env) consists of a homotrimer of non-covalently associated gp120-gp41 heterodimers. The resulting complex protrudes from the virus surface as a spike. In terms of processing, specific enzymatic cleavages in vivo yield mature proteins. Envelope glycoproteins are synthesized as an inactive precursor that is heavily N-glycosylated and processed likely by host cell furin in the Golgi to yield the mature SU and TM proteins. The cleavage site between SU and TM requires the minimal sequence [KR]-X-[KR]-R.

It is found in the virion membrane. The protein resides in the host cell membrane. Its subcellular location is the host endosome membrane. In terms of biological role, the surface protein gp120 (SU) attaches the virus to the host lymphoid cell by binding to the primary receptor CD4. This interaction induces a structural rearrangement creating a high affinity binding site for a chemokine coreceptor like CCR5. This peculiar 2 stage receptor-interaction strategy allows gp120 to maintain the highly conserved coreceptor-binding site in a cryptic conformation, protected from neutralizing antibodies. These changes are transmitted to the transmembrane protein gp41 and are thought to activate its fusogenic potential by unmasking its fusion peptide. Surface protein gp120 (SU) may target the virus to gut-associated lymphoid tissue (GALT) by binding host ITGA4/ITGB7 (alpha-4/beta-7 integrins), a complex that mediates T-cell migration to the GALT. Interaction between gp120 and ITGA4/ITGB7 would allow the virus to enter GALT early in the infection, infecting and killing most of GALT's resting CD4+ T-cells. This T-cell depletion is believed to be the major insult to the host immune system leading to AIDS. Its function is as follows. The surface protein gp120 is a ligand for CD209/DC-SIGN and CLEC4M/DC-SIGNR, which are respectively found on dendritic cells (DCs), and on endothelial cells of liver sinusoids and lymph node sinuses. These interactions allow capture of viral particles at mucosal surfaces by these cells and subsequent transmission to permissive cells. DCs are professional antigen presenting cells, critical for host immunity by inducing specific immune responses against a broad variety of pathogens. They act as sentinels in various tissues where they take up antigen, process it, and present it to T-cells following migration to lymphoid organs. SIV subverts the migration properties of dendritic cells to gain access to CD4+ T-cells in lymph nodes. Virus transmission to permissive T-cells occurs either in trans (without DCs infection, through viral capture and transmission), or in cis (following DCs productive infection, through the usual CD4-gp120 interaction), thereby inducing a robust infection. In trans infection, bound virions remain infectious over days and it is proposed that they are not degraded, but protected in non-lysosomal acidic organelles within the DCs close to the cell membrane thus contributing to the viral infectious potential during DCs' migration from the periphery to the lymphoid tissues. On arrival at lymphoid tissues, intact virions recycle back to DCs' cell surface allowing virus transmission to CD4+ T-cells. Virion capture also seems to lead to MHC-II-restricted viral antigen presentation, and probably to the activation of SIV-specific CD4+ cells. Functionally, the transmembrane protein gp41 (TM) acts as a class I viral fusion protein. Under the current model, the protein has at least 3 conformational states: pre-fusion native state, pre-hairpin intermediate state, and post-fusion hairpin state. During fusion of viral and target intracellular membranes, the coiled coil regions (heptad repeats) assume a trimer-of-hairpins structure, positioning the fusion peptide in close proximity to the C-terminal region of the ectodomain. The formation of this structure appears to drive apposition and subsequent fusion of viral and target cell membranes. Complete fusion occurs in host cell endosomes. The virus undergoes clathrin-dependent internalization long before endosomal fusion, thus minimizing the surface exposure of conserved viral epitopes during fusion and reducing the efficacy of inhibitors targeting these epitopes. Membranes fusion leads to delivery of the nucleocapsid into the cytoplasm. In terms of biological role, the envelope glycoprotein gp160 precursor down-modulates cell surface CD4 antigen by interacting with it in the endoplasmic reticulum and blocking its transport to the cell surface. The gp120-gp41 heterodimer allows rapid transcytosis of the virus through CD4 negative cells such as simple epithelial monolayers of the intestinal, rectal and endocervical epithelial barriers. Both gp120 and gp41 specifically recognize glycosphingolipids galactosyl-ceramide (GalCer) or 3' sulfo-galactosyl-ceramide (GalS) present in the lipid rafts structures of epithelial cells. Binding to these alternative receptors allows the rapid transcytosis of the virus through the epithelial cells. This transcytotic vesicle-mediated transport of virions from the apical side to the basolateral side of the epithelial cells does not involve infection of the cells themselves. The polypeptide is Envelope glycoprotein gp160 (env) (Simian immunodeficiency virus agm.vervet (isolate AGM TYO-1) (SIV-agm.ver)).